Consider the following 265-residue polypeptide: MAQLRADDLSFIFGLLGNIVSFMVFLAPVPTFYKIYKRKSSEGYQAIPYMVALFSAGLLLYYAYLRKNAYLIVSINGFGCAIELTYISLFLFYAPRKSKIFTGWLMLLELGALGMVMPITYLLAEGSHRVMIVGWICAAINVAVFAAPLSIMRQVIKTKSVEFMPFTLSLFLTLCATMWFFYGFFKKDFYIAFPNILGFLFGIVQMLLYFVYKDSKRIDDEKSDPVREATKSKEGVEIIINIEDDNSDNALQSMEKDFSRLRTSK.

The Extracellular portion of the chain corresponds to 1–8 (MAQLRADD). Residues 9 to 29 (LSFIFGLLGNIVSFMVFLAPV) form a helical membrane-spanning segment. A MtN3/slv 1 domain is found at 11–97 (FIFGLLGNIV…SLFLFYAPRK (87 aa)). Topologically, residues 30-44 (PTFYKIYKRKSSEGY) are cytoplasmic. A helical membrane pass occupies residues 45–65 (QAIPYMVALFSAGLLLYYAYL). Over 66–71 (RKNAYL) the chain is Extracellular. The chain crosses the membrane as a helical span at residues 72–92 (IVSINGFGCAIELTYISLFLF). Residues 93-103 (YAPRKSKIFTG) lie on the Cytoplasmic side of the membrane. The chain crosses the membrane as a helical span at residues 104–124 (WLMLLELGALGMVMPITYLLA). At 125 to 130 (EGSHRV) the chain is on the extracellular side. Residues 131–151 (MIVGWICAAINVAVFAAPLSI) form a helical membrane-spanning segment. The region spanning 132 to 216 (IVGWICAAIN…LLYFVYKDSK (85 aa)) is the MtN3/slv 2 domain. The Cytoplasmic portion of the chain corresponds to 152–164 (MRQVIKTKSVEFM). Residues 165 to 185 (PFTLSLFLTLCATMWFFYGFF) form a helical membrane-spanning segment. Topologically, residues 186–190 (KKDFY) are extracellular. Residues 191–211 (IAFPNILGFLFGIVQMLLYFV) traverse the membrane as a helical segment. Residues 212-265 (YKDSKRIDDEKSDPVREATKSKEGVEIIINIEDDNSDNALQSMEKDFSRLRTSK) are Cytoplasmic-facing.

This sequence belongs to the SWEET sugar transporter family. In terms of assembly, forms homooligomers and/or heterooligomers. As to expression, highly expressed in nectary tissue and weakly in the stamen, especially in stomium cells and in the upper part of the filaments.

Its subcellular location is the cell membrane. In terms of biological role, mediates both low-affinity uptake and efflux of sugar across the plasma membrane. Promotes the formation of phloem bundles in mid-veins. Probably involved in the development of stomium cells that control anther opening time. Required for pollen viability. This chain is Bidirectional sugar transporter NEC1 (NEC1), found in Petunia hybrida (Petunia).